Here is a 172-residue protein sequence, read N- to C-terminus: ATP synthase subunit b (172 aa).

A helical transmembrane segment spans residues 11-30; sequence LIAQIINFVIVLWVLNRFAF.

It belongs to the ATPase B chain family. As to quaternary structure, F-type ATPases have 2 components, F(1) - the catalytic core - and F(0) - the membrane proton channel. F(1) has five subunits: alpha(3), beta(3), gamma(1), delta(1), epsilon(1). F(0) has three main subunits: a(1), b(2) and c(10-14). The alpha and beta chains form an alternating ring which encloses part of the gamma chain. F(1) is attached to F(0) by a central stalk formed by the gamma and epsilon chains, while a peripheral stalk is formed by the delta and b chains.

It localises to the cell inner membrane. F(1)F(0) ATP synthase produces ATP from ADP in the presence of a proton or sodium gradient. F-type ATPases consist of two structural domains, F(1) containing the extramembraneous catalytic core and F(0) containing the membrane proton channel, linked together by a central stalk and a peripheral stalk. During catalysis, ATP synthesis in the catalytic domain of F(1) is coupled via a rotary mechanism of the central stalk subunits to proton translocation. Its function is as follows. Component of the F(0) channel, it forms part of the peripheral stalk, linking F(1) to F(0). The polypeptide is ATP synthase subunit b (Methylacidiphilum infernorum (isolate V4) (Methylokorus infernorum (strain V4))).